A 430-amino-acid chain; its full sequence is Asparagine--tRNA ligase (430 aa).

It belongs to the class-II aminoacyl-tRNA synthetase family. As to quaternary structure, homodimer.

The protein localises to the cytoplasm. It carries out the reaction tRNA(Asn) + L-asparagine + ATP = L-asparaginyl-tRNA(Asn) + AMP + diphosphate + H(+). This chain is Asparagine--tRNA ligase, found in Bacillus licheniformis (strain ATCC 14580 / DSM 13 / JCM 2505 / CCUG 7422 / NBRC 12200 / NCIMB 9375 / NCTC 10341 / NRRL NRS-1264 / Gibson 46).